The chain runs to 203 residues: Recombination protein RecR (203 aa).

The C4-type zinc-finger motif lies at 56 to 71 (CAVCGNVSDNERCRIC). The region spanning 79–179 (SVVCIVEEPK…TVTRIASGLP (101 aa)) is the Toprim domain.

Belongs to the RecR family.

Functionally, may play a role in DNA repair. It seems to be involved in an RecBC-independent recombinational process of DNA repair. It may act with RecF and RecO. This is Recombination protein RecR from Mycobacterium bovis (strain ATCC BAA-935 / AF2122/97).